The following is a 51-amino-acid chain: Ovomucoid (51 aa).

In terms of domain architecture, Kazal-like spans 3–51 (VDCSGYPKPDCTLESFPLCGSDNQTYSNKCAFCNAAVERNVTLRHLGEC). Intrachain disulfides connect cysteine 5/cysteine 35, cysteine 13/cysteine 32, and cysteine 21/cysteine 51. Residue asparagine 42 is glycosylated (N-linked (GlcNAc...) asparagine).

It localises to the secreted. In Rhynchotus rufescens (Red-winged tinamou), this protein is Ovomucoid.